The following is a 380-amino-acid chain: Queuine tRNA-ribosyltransferase (380 aa).

Catalysis depends on Asp96, which acts as the Proton acceptor. Residues 96–100 (DSGGF), Asp150, Gln193, and Gly220 contribute to the substrate site. The tract at residues 251–257 (GVGAPDS) is RNA binding. Asp270 functions as the Nucleophile in the catalytic mechanism. Residues 275–279 (TRIAR) form an RNA binding; important for wobble base 34 recognition region. Residues Cys308, Cys310, Cys313, and His339 each coordinate Zn(2+).

It belongs to the queuine tRNA-ribosyltransferase family. As to quaternary structure, homodimer. Within each dimer, one monomer is responsible for RNA recognition and catalysis, while the other monomer binds to the replacement base PreQ1. Zn(2+) serves as cofactor.

The enzyme catalyses 7-aminomethyl-7-carbaguanine + guanosine(34) in tRNA = 7-aminomethyl-7-carbaguanosine(34) in tRNA + guanine. It functions in the pathway tRNA modification; tRNA-queuosine biosynthesis. Functionally, catalyzes the base-exchange of a guanine (G) residue with the queuine precursor 7-aminomethyl-7-deazaguanine (PreQ1) at position 34 (anticodon wobble position) in tRNAs with GU(N) anticodons (tRNA-Asp, -Asn, -His and -Tyr). Catalysis occurs through a double-displacement mechanism. The nucleophile active site attacks the C1' of nucleotide 34 to detach the guanine base from the RNA, forming a covalent enzyme-RNA intermediate. The proton acceptor active site deprotonates the incoming PreQ1, allowing a nucleophilic attack on the C1' of the ribose to form the product. After dissociation, two additional enzymatic reactions on the tRNA convert PreQ1 to queuine (Q), resulting in the hypermodified nucleoside queuosine (7-(((4,5-cis-dihydroxy-2-cyclopenten-1-yl)amino)methyl)-7-deazaguanosine). This Streptococcus pneumoniae (strain P1031) protein is Queuine tRNA-ribosyltransferase.